Reading from the N-terminus, the 196-residue chain is Phosphoheptose isomerase (196 aa).

Positions 35 to 194 constitute an SIS domain; the sequence is LTACLRCGGK…EKELFTPSGQ (160 aa). 50 to 52 provides a ligand contact to substrate; the sequence is NGG. Zn(2+) is bound by residues H59 and E63. Substrate is bound by residues E63, 92 to 93, 118 to 120, S123, and Q170; these read ND and STS. Residues Q170 and H178 each coordinate Zn(2+).

It belongs to the SIS family. GmhA subfamily. In terms of assembly, homotetramer. The cofactor is Zn(2+).

The protein resides in the cytoplasm. It carries out the reaction 2 D-sedoheptulose 7-phosphate = D-glycero-alpha-D-manno-heptose 7-phosphate + D-glycero-beta-D-manno-heptose 7-phosphate. It participates in carbohydrate biosynthesis; D-glycero-D-manno-heptose 7-phosphate biosynthesis; D-glycero-alpha-D-manno-heptose 7-phosphate and D-glycero-beta-D-manno-heptose 7-phosphate from sedoheptulose 7-phosphate: step 1/1. Its function is as follows. Catalyzes the isomerization of sedoheptulose 7-phosphate in D-glycero-D-manno-heptose 7-phosphate. This chain is Phosphoheptose isomerase, found in Syntrophotalea carbinolica (strain DSM 2380 / NBRC 103641 / GraBd1) (Pelobacter carbinolicus).